Reading from the N-terminus, the 324-residue chain is Putative S-adenosyl-L-methionine-dependent methyltransferase MUL_0818 (324 aa).

S-adenosyl-L-methionine contacts are provided by residues Asp138 and 167-168; that span reads DL.

It belongs to the UPF0677 family.

In terms of biological role, exhibits S-adenosyl-L-methionine-dependent methyltransferase activity. The polypeptide is Putative S-adenosyl-L-methionine-dependent methyltransferase MUL_0818 (Mycobacterium ulcerans (strain Agy99)).